A 121-amino-acid chain; its full sequence is Large ribosomal subunit protein bL20 (121 aa).

The protein belongs to the bacterial ribosomal protein bL20 family.

In terms of biological role, binds directly to 23S ribosomal RNA and is necessary for the in vitro assembly process of the 50S ribosomal subunit. It is not involved in the protein synthesizing functions of that subunit. In Mycoplasma mycoides subsp. mycoides SC (strain CCUG 32753 / NCTC 10114 / PG1), this protein is Large ribosomal subunit protein bL20.